Here is a 386-residue protein sequence, read N- to C-terminus: Ribonucleoside-diphosphate reductase subunit M2 (386 aa).

Polar residues predominate over residues 1–24 (MSSTRSPLKTKNENTISTKMNNMS). Residues 1–36 (MSSTRSPLKTKNENTISTKMNNMSFVDKENTPPSLS) are disordered. The residue at position 6 (S6) is a Phosphoserine. T31 carries the post-translational modification Phosphothreonine. Residues D135, E166, and H169 each contribute to the Fe cation site. The active site involves Y173. Residues E229, E263, and H266 each coordinate Fe cation.

This sequence belongs to the ribonucleoside diphosphate reductase small chain family. Heterodimer of a large and a small subunit. It depends on Fe cation as a cofactor.

The protein resides in the cytoplasm. It carries out the reaction a 2'-deoxyribonucleoside 5'-diphosphate + [thioredoxin]-disulfide + H2O = a ribonucleoside 5'-diphosphate + [thioredoxin]-dithiol. Its function is as follows. Provides the precursors necessary for DNA synthesis. Catalyzes the biosynthesis of deoxyribonucleotides from the corresponding ribonucleotides. This chain is Ribonucleoside-diphosphate reductase subunit M2 (rrm2), found in Danio rerio (Zebrafish).